The following is a 149-amino-acid chain: Heavy metal-associated isoprenylated plant protein 21 (149 aa).

One can recognise an HMA domain in the interval 25–88; that stretch reads LQTVDIKVKM…RVKSTGKKAE (64 aa). A metal cation is bound by residues cysteine 36 and cysteine 39. Cysteine 146 carries the post-translational modification Cysteine methyl ester. Residue cysteine 146 is the site of S-farnesyl cysteine attachment. Residues 147–149 constitute a propeptide, removed in mature form; sequence SIM.

This sequence belongs to the HIPP family. In terms of assembly, interacts with ZHD11/HB29. In terms of tissue distribution, expressed at low levels in leaves and sepals.

It localises to the membrane. Heavy-metal-binding protein. Binds cadmium. May be involved in cadmium transport and play a role in cadmium detoxification. The sequence is that of Heavy metal-associated isoprenylated plant protein 21 from Arabidopsis thaliana (Mouse-ear cress).